The chain runs to 120 residues: Ribosome-binding factor A (120 aa).

It belongs to the RbfA family. Monomer. Binds 30S ribosomal subunits, but not 50S ribosomal subunits or 70S ribosomes.

The protein localises to the cytoplasm. In terms of biological role, one of several proteins that assist in the late maturation steps of the functional core of the 30S ribosomal subunit. Associates with free 30S ribosomal subunits (but not with 30S subunits that are part of 70S ribosomes or polysomes). Required for efficient processing of 16S rRNA. May interact with the 5'-terminal helix region of 16S rRNA. This is Ribosome-binding factor A from Borrelia garinii subsp. bavariensis (strain ATCC BAA-2496 / DSM 23469 / PBi) (Borreliella bavariensis).